The primary structure comprises 309 residues: Taste receptor type 2 member 20 (309 aa).

Over 1–6 (MMSFLH) the chain is Extracellular. Residues 7 to 27 (IVFSILVVVAFILGNFANGFI) traverse the membrane as a helical segment. Residues 28–46 (ALINFIAWVKRQKISSADQ) lie on the Cytoplasmic side of the membrane. The chain crosses the membrane as a helical span at residues 47-67 (IIAALAVSRVGLLWVILLHWY). Residues 68–79 (STVLNPTSSNLK) are Extracellular-facing. A helical membrane pass occupies residues 80-100 (VTIFISNAWAVTNHFSIWLAA). Residues 101–125 (SLSIFYLLKIVNFSRLIFHHLKRKA) are Cytoplasmic-facing. Residues 126–146 (KSVVLVIVLGSLFFLVCHLVM) form a helical membrane-spanning segment. Residues 147–178 (KSTYINVWTEEYEGNVTWKIKLRNAMHLSNLT) lie on the Extracellular side of the membrane. Residues N161 and N176 are each glycosylated (N-linked (GlcNAc...) asparagine). The chain crosses the membrane as a helical span at residues 179–199 (VAMLANLIPFTLTLISFLLLI). Topologically, residues 200 to 229 (YSLCKHLKKMQLHGKGSQDPSTKIHIKALQ) are cytoplasmic. Residues 230 to 250 (TVTSFLILLAIYFLCLITSFW) form a helical membrane-spanning segment. Residues 251-259 (NSKMRPKEI) lie on the Extracellular side of the membrane. Residues 260–280 (VLMLCQAFGIIYPSFHSFILI) traverse the membrane as a helical segment. The Cytoplasmic segment spans residues 281–309 (WGNKTLKQTFLSVLWRVTCWAKGQNQSTP).

It belongs to the G-protein coupled receptor T2R family.

Its subcellular location is the membrane. Its function is as follows. Receptor that may play a role in the perception of bitterness and is gustducin-linked. May play a role in sensing the chemical composition of the gastrointestinal content. The activity of this receptor may stimulate alpha gustducin, mediate PLC-beta-2 activation and lead to the gating of TRPM5. The chain is Taste receptor type 2 member 20 (TAS2R20) from Gorilla gorilla gorilla (Western lowland gorilla).